The sequence spans 479 residues: Bifunctional protein HldE (479 aa).

The tract at residues 1–322 (MIDDFRFGRI…RELLQEMPET (322 aa)) is ribokinase. ATP is bound at residue 198–201 (NRIE). Asp267 is a catalytic residue. The tract at residues 347-479 (FTNGCFDLVH…LVRGMQSAPS (133 aa)) is cytidylyltransferase.

It in the N-terminal section; belongs to the carbohydrate kinase PfkB family. This sequence in the C-terminal section; belongs to the cytidylyltransferase family. In terms of assembly, homodimer.

It catalyses the reaction D-glycero-beta-D-manno-heptose 7-phosphate + ATP = D-glycero-beta-D-manno-heptose 1,7-bisphosphate + ADP + H(+). The catalysed reaction is D-glycero-beta-D-manno-heptose 1-phosphate + ATP + H(+) = ADP-D-glycero-beta-D-manno-heptose + diphosphate. It functions in the pathway nucleotide-sugar biosynthesis; ADP-L-glycero-beta-D-manno-heptose biosynthesis; ADP-L-glycero-beta-D-manno-heptose from D-glycero-beta-D-manno-heptose 7-phosphate: step 1/4. The protein operates within nucleotide-sugar biosynthesis; ADP-L-glycero-beta-D-manno-heptose biosynthesis; ADP-L-glycero-beta-D-manno-heptose from D-glycero-beta-D-manno-heptose 7-phosphate: step 3/4. Its function is as follows. Catalyzes the phosphorylation of D-glycero-D-manno-heptose 7-phosphate at the C-1 position to selectively form D-glycero-beta-D-manno-heptose-1,7-bisphosphate. Catalyzes the ADP transfer from ATP to D-glycero-beta-D-manno-heptose 1-phosphate, yielding ADP-D-glycero-beta-D-manno-heptose. This Gluconobacter oxydans (strain 621H) (Gluconobacter suboxydans) protein is Bifunctional protein HldE.